The primary structure comprises 750 residues: uncharacterized protein (750 aa).

3 consecutive transmembrane segments (helical) span residues 1 to 21 (MSIISSWLLVSIICLTTSIVT), 465 to 485 (YGANETGIATFIPGSSIISYL), and 586 to 606 (GMFGAAIYSWNFEGMSFVAVS).

The protein resides in the membrane. This is an uncharacterized protein from Saccharomyces cerevisiae (strain ATCC 204508 / S288c) (Baker's yeast).